Here is a 686-residue protein sequence, read N- to C-terminus: ATP-dependent zinc metalloprotease FTSH 1, chloroplastic (686 aa).

Residues 1 to 16 constitute a chloroplast transit peptide; that stretch reads MAPPCSISSASHLLIT. The helical transmembrane segment at 173–193 threads the bilayer; sequence FLAFVGNLLFPFLAFAGLFFL. Residue 272–279 coordinates ATP; sequence GPPGTGKT. Zn(2+) is bound at residue His494. Glu495 is an active-site residue. Zn(2+)-binding residues include His498 and Asp575.

The protein in the N-terminal section; belongs to the AAA ATPase family. In the C-terminal section; belongs to the peptidase M41 family. It depends on Zn(2+) as a cofactor.

It localises to the plastid. The protein resides in the chloroplast thylakoid membrane. Its function is as follows. Probable ATP-dependent zinc metallopeptidase. The polypeptide is ATP-dependent zinc metalloprotease FTSH 1, chloroplastic (FTSH1) (Oryza sativa subsp. japonica (Rice)).